A 1140-amino-acid polypeptide reads, in one-letter code: MLESEFQREHAFESATEQELTCPISDNLHESVEADDDSVQMLDNLTLNTNPAESCESEEIQTKALPSSSSGQDLVASDEDSEDVELGDTFYSCSELLQRNCCVLPYKAQKKTKENPFDFDVRTWSSPCDFPRFGEMILLSPVLNPMPFFSCCTKRAIFCSSPGSSHGGSTPRSPFSPSSPRERHNKGLADSRFQRPLPNSSALDPSSPGSMLHGGHKSHEAFQMKQGRFDLQAAKISELMKSNNLDNAPTQSLLSIVNGILDETIERKNGELPQRVACLLRKVVQEIERRISTQSEHLRTQNSVFKAREEKYQSRIKVLETLASGTSEENETEKSKLEEKKKDKEEDMVGIEKENGHYNLEISTLRRELETTKKAYEQQCLQMESKTKGATAGIEDRVKELEQMRKDASVARKALEERVRELEKMGKEADAVKMNLEEKVKELQKYKDETITVTTSIEGKNRELEQFKQETMTVTTSLEAQNRELEQAIKETMTVNTSLEAKNRELEQSKKETMTVNTSLKAKNRELEQNLVHWKSKAKEMEEKSELKNRSWSQKELSYRSFISFQCQALQELRFYSKSIKQEILKVQDKYTVEFSQLGKKLLELGDAAANYHEVLTENQKLFNELQELKGNIRVYCRVRPFLRGQGASKTVVEHIGDHGELVVLNPTKPGKDAHRKFRFNKVYSPASTQAEVFSDIKPLIRSVLDGYNVCIFAYGQTGSGKTYTMTGPDGASEEEWGVNYRALNDLFRISQSRKSNIAYEVGVQMVEIYNEQVRDLLSGILSTTQQNGLAVPDASMYPVTSTSDVLELMSIGLQNRVVSSTALNERSSRSHSIVTVHVRGKDLKTGSALYGNLHLVDLAGSERVDRSEVTGDRLKEAQHINKSLSALGDVIFSLASKSSHVPYRNSKLTQLLQSSLGGRAKTLMFVQLNPDITSYSESMSTLKFAERVSGVELGAAKSSKDGRDVRELMEQDTIARKDDEIERLHLLKDINYPQRLQKKSLGQSDDFNSEAGDSQLSIEDDSRFQHDYTRQSRHSVTDGEALASSTDAEYDDETEGSTDAPCAAEGRKPLKISDKPKPVTPRSNTTTSRPLDKLKQVTMRTTNIAKATSALLSPSSQGMKKTGSASNFLKSPKDSKRWS.

A compositionally biased stretch (basic and acidic residues) spans 1 to 12 (MLESEFQREHAF). Disordered regions lie at residues 1–37 (MLES…ADDD), 50–81 (NPAE…DEDS), 161–217 (SPGS…GGHK), and 323–347 (ASGT…KEED). The span at 161–179 (SPGSSHGGSTPRSPFSPSS) shows a compositional bias: low complexity. The span at 180-193 (PRERHNKGLADSRF) shows a compositional bias: basic and acidic residues. The segment covering 197-209 (LPNSSALDPSSPG) has biased composition (polar residues). Residues 327–546 (SEENETEKSK…KAKEMEEKSE (220 aa)) adopt a coiled-coil conformation. Basic and acidic residues predominate over residues 332 to 347 (TEKSKLEEKKKDKEED). The 321-residue stretch at 632 to 952 (NIRVYCRVRP…LKFAERVSGV (321 aa)) folds into the Kinesin motor domain. Residue 716–723 (GQTGSGKT) coordinates ATP. The span at 1002-1018 (LGQSDDFNSEAGDSQLS) shows a compositional bias: polar residues. 2 disordered regions span residues 1002–1021 (LGQS…SIED) and 1028–1140 (DYTR…KRWS). A compositionally biased stretch (basic and acidic residues) spans 1066 to 1078 (EGRKPLKISDKPK). The span at 1099–1130 (TMRTTNIAKATSALLSPSSQGMKKTGSASNFL) shows a compositional bias: polar residues.

The protein belongs to the TRAFAC class myosin-kinesin ATPase superfamily. Kinesin family. KIN-14 subfamily.

This chain is Kinesin-like protein KIN-14O, found in Arabidopsis thaliana (Mouse-ear cress).